The chain runs to 314 residues: Ribosomal RNA small subunit methyltransferase H (314 aa).

S-adenosyl-L-methionine contacts are provided by residues 35–37 (GGH), aspartate 54, phenylalanine 83, aspartate 104, and glutamine 111.

It belongs to the methyltransferase superfamily. RsmH family.

The protein resides in the cytoplasm. It catalyses the reaction cytidine(1402) in 16S rRNA + S-adenosyl-L-methionine = N(4)-methylcytidine(1402) in 16S rRNA + S-adenosyl-L-homocysteine + H(+). Functionally, specifically methylates the N4 position of cytidine in position 1402 (C1402) of 16S rRNA. This is Ribosomal RNA small subunit methyltransferase H from Oenococcus oeni (strain ATCC BAA-331 / PSU-1).